Consider the following 232-residue polypeptide: 7-cyano-7-deazaguanine synthase (232 aa).

Position 8–18 (8–18 (FSGGQDSTTCL)) interacts with ATP. Cys-189, Cys-198, Cys-201, and Cys-204 together coordinate Zn(2+).

Belongs to the QueC family. Zn(2+) serves as cofactor.

The catalysed reaction is 7-carboxy-7-deazaguanine + NH4(+) + ATP = 7-cyano-7-deazaguanine + ADP + phosphate + H2O + H(+). It participates in purine metabolism; 7-cyano-7-deazaguanine biosynthesis. Its function is as follows. Catalyzes the ATP-dependent conversion of 7-carboxy-7-deazaguanine (CDG) to 7-cyano-7-deazaguanine (preQ(0)). This is 7-cyano-7-deazaguanine synthase from Serratia proteamaculans (strain 568).